A 1312-amino-acid chain; its full sequence is Multidrug resistance protein 3 (1312 aa).

The chain crosses the membrane as a helical span at residues 51–71 (GFIDYILLIGGIIGAMAAGVL). The ABC transmembrane type-1 1 domain occupies 59–369 (IGGIIGAMAA…VAMPINALST (311 aa)). A glycan (N-linked (GlcNAc...) asparagine) is linked at Asn-98. Transmembrane regions (helical) follow at residues 127–147 (IYFA…FFVL), 197–217 (KFGV…IGFS), 224–244 (LVIM…GFFA), 302–322 (VVGV…ALGS), and 344–364 (MVVF…AMPI). Residues 404–643 (IKLEDVQFRY…KATYYGLVKR (240 aa)) enclose the ABC transporter 1 domain. An ATP-binding site is contributed by 439-446 (GASGCGKS). The ABC transmembrane type-1 2 domain occupies 724–1033 (LLSFLGLIGG…LGQMIPDVGK (310 aa)). Helical transmembrane passes span 725-745 (LSFL…FYMI) and 776-796 (IWIL…LGLF). Asn-819 carries an N-linked (GlcNAc...) asparagine glycan. The next 3 helical transmembrane spans lie at 852 to 872 (VGNV…AFYY), 874 to 894 (WKVA…VFLN), and 958 to 978 (AFVS…SFYI). An ABC transporter 2 domain is found at 1068–1307 (IEFKDICFRY…KGFYYTLAMQ (240 aa)). 1103 to 1110 (GASGCGKS) contacts ATP.

This sequence belongs to the ABC transporter superfamily. ABCB family. Multidrug resistance exporter (TC 3.A.1.201) subfamily.

It localises to the membrane. The enzyme catalyses ATP + H2O + xenobioticSide 1 = ADP + phosphate + xenobioticSide 2.. In terms of biological role, energy-dependent efflux pump responsible for decreased drug accumulation in multidrug resistance parasites. This chain is Multidrug resistance protein 3, found in Entamoeba histolytica (strain ATCC 30459 / HM-1:IMSS / ABRM).